The following is a 297-amino-acid chain: N-acetylmuramic acid 6-phosphate etherase (297 aa).

One can recognise an SIS domain in the interval 56–219 (AIEAFNKGGR…STISMIGIGK (164 aa)). Residue E84 is the Proton donor of the active site. E115 is an active-site residue.

It belongs to the GCKR-like family. MurNAc-6-P etherase subfamily. In terms of assembly, homodimer.

It carries out the reaction N-acetyl-D-muramate 6-phosphate + H2O = N-acetyl-D-glucosamine 6-phosphate + (R)-lactate. The protein operates within amino-sugar metabolism; N-acetylmuramate degradation. Functionally, specifically catalyzes the cleavage of the D-lactyl ether substituent of MurNAc 6-phosphate, producing GlcNAc 6-phosphate and D-lactate. This chain is N-acetylmuramic acid 6-phosphate etherase, found in Lactococcus lactis subsp. cremoris (strain MG1363).